Consider the following 144-residue polypeptide: tRNA-specific adenosine deaminase (144 aa).

The CMP/dCMP-type deaminase domain occupies 1–116 (MEQALKQAGI…SNLRYFNSSV (116 aa)). Position 48 (His48) interacts with Zn(2+). Glu50 functions as the Proton donor in the catalytic mechanism. Zn(2+) contacts are provided by Cys78 and Cys81.

Belongs to the cytidine and deoxycytidylate deaminase family. Homodimer. Zn(2+) is required as a cofactor.

The catalysed reaction is adenosine(34) in tRNA + H2O + H(+) = inosine(34) in tRNA + NH4(+). Its function is as follows. Catalyzes the deamination of adenosine to inosine at the wobble position 34 of tRNA(Arg2). This is tRNA-specific adenosine deaminase from Rickettsia felis (strain ATCC VR-1525 / URRWXCal2) (Rickettsia azadi).